Consider the following 108-residue polypeptide: Anti-CBASS protein 2 (108 aa).

Positions 4, 11, and 26 each coordinate 3',3'-cGAMP.

It belongs to the Acb2 family. Homohexamer in apo and 3',3'-cGAMP-bound form.

Functionally, antagonizes CBASS (cyclic oligonucleotide-based antiphage signaling system). Binds and sequesters host-produced 3',3'-cyclic GMP-AMP (cGAMP) (thus preventing host CapV activation) without degrading the cyclic nucleotide. Probably binds some other cyclic dinucleotides as well. The polypeptide is Anti-CBASS protein 2 (Pseudomonas phage JBD67).